Reading from the N-terminus, the 297-residue chain is 4-hydroxy-tetrahydrodipicolinate synthase (297 aa).

T47 contributes to the pyruvate binding site. Residue Y136 is the Proton donor/acceptor of the active site. K165 acts as the Schiff-base intermediate with substrate in catalysis. Residue T206 coordinates pyruvate.

It belongs to the DapA family. As to quaternary structure, homotetramer; dimer of dimers.

The protein resides in the cytoplasm. The catalysed reaction is L-aspartate 4-semialdehyde + pyruvate = (2S,4S)-4-hydroxy-2,3,4,5-tetrahydrodipicolinate + H2O + H(+). The protein operates within amino-acid biosynthesis; L-lysine biosynthesis via DAP pathway; (S)-tetrahydrodipicolinate from L-aspartate: step 3/4. Catalyzes the condensation of (S)-aspartate-beta-semialdehyde [(S)-ASA] and pyruvate to 4-hydroxy-tetrahydrodipicolinate (HTPA). In Sulfurovum sp. (strain NBC37-1), this protein is 4-hydroxy-tetrahydrodipicolinate synthase.